We begin with the raw amino-acid sequence, 197 residues long: Auxin-responsive protein IAA19 (197 aa).

The short motif at 13–17 (LRLGL) is the EAR-like (transcriptional repression) element. A compositionally biased stretch (polar residues) spans 35-47 (MNMTSSGSNSDQC). Positions 35 to 67 (MNMTSSGSNSDQCESGVVSSGGDAEKVNDSPAA) are disordered. Residues 96-184 (LGYVKVSMDG…KRLRIMKRSD (89 aa)) form the PB1 domain.

It belongs to the Aux/IAA family. Homodimers and heterodimers. Interacts with the auxin response factor ARF7.

Its subcellular location is the nucleus. Functionally, aux/IAA proteins are short-lived transcriptional factors that function as repressors of early auxin response genes at low auxin concentrations. Repression is thought to result from the interaction with auxin response factors (ARFs), proteins that bind to the auxin-responsive promoter element (AuxRE). Formation of heterodimers with ARF proteins may alter their ability to modulate early auxin response genes expression. The chain is Auxin-responsive protein IAA19 (IAA19) from Arabidopsis thaliana (Mouse-ear cress).